Consider the following 62-residue polypeptide: Cecropin-A (62 aa).

Positions 1–20 are cleaved as a signal peptide; that stretch reads MNLVKILFCVFACLVFTVTA. The propeptide at 21–24 is removed by a dipeptidylpeptidase; the sequence is VPEP. T60 is modified (threonine amide).

Belongs to the cecropin family.

The protein resides in the secreted. In terms of biological role, has antibacterial activity. The chain is Cecropin-A from Trichoplusia ni (Cabbage looper).